Consider the following 495-residue polypeptide: Dihydrolipoyl dehydrogenase, mitochondrial (495 aa).

Residues 59–68 (EKNATLGGTC), Lys-77, and 169–171 (SGS) contribute to the FAD site. Cys-68 and Cys-73 are disulfide-bonded. Residues 206 to 213 (GAGVIGLE), Glu-229, Val-264, and Gly-299 each bind NAD(+). FAD is bound by residues Asp-340 and 346-349 (MLAH). His-472 (proton acceptor) is an active-site residue.

Belongs to the class-I pyridine nucleotide-disulfide oxidoreductase family. Requires FAD as cofactor.

Its subcellular location is the mitochondrion matrix. The catalysed reaction is N(6)-[(R)-dihydrolipoyl]-L-lysyl-[protein] + NAD(+) = N(6)-[(R)-lipoyl]-L-lysyl-[protein] + NADH + H(+). This Caenorhabditis elegans protein is Dihydrolipoyl dehydrogenase, mitochondrial (dld-1).